The primary structure comprises 257 residues: NH(3)-dependent NAD(+) synthetase (257 aa).

Residue 32–39 coordinates ATP; that stretch reads GLSGGVDS. Residue Asp38 coordinates Mg(2+). Arg113 contributes to the deamido-NAD(+) binding site. Thr133 lines the ATP pocket. Glu138 contributes to the Mg(2+) binding site. 2 residues coordinate ATP: Lys162 and Ser184.

This sequence belongs to the NAD synthetase family. Homodimer.

The catalysed reaction is deamido-NAD(+) + NH4(+) + ATP = AMP + diphosphate + NAD(+) + H(+). The protein operates within cofactor biosynthesis; NAD(+) biosynthesis; NAD(+) from deamido-NAD(+) (ammonia route): step 1/1. Catalyzes the ATP-dependent amidation of deamido-NAD to form NAD. Uses ammonia as a nitrogen source. The chain is NH(3)-dependent NAD(+) synthetase from Wolinella succinogenes (strain ATCC 29543 / DSM 1740 / CCUG 13145 / JCM 31913 / LMG 7466 / NCTC 11488 / FDC 602W) (Vibrio succinogenes).